Reading from the N-terminus, the 352-residue chain is 26S proteasome regulatory subunit rpn-8 (352 aa).

The 137-residue stretch at V16–I152 folds into the MPN domain. Positions N303–K352 are disordered. Basic and acidic residues-rich tracts occupy residues Q306 to G331 and E339 to K352.

Belongs to the peptidase M67A family.

Its function is as follows. Acts as a regulatory subunit of the 26S proteasome which is involved in the ATP-dependent degradation of ubiquitinated proteins. In Neurospora crassa (strain ATCC 24698 / 74-OR23-1A / CBS 708.71 / DSM 1257 / FGSC 987), this protein is 26S proteasome regulatory subunit rpn-8 (rpn-8).